Here is a 788-residue protein sequence, read N- to C-terminus: Bifunctional purine biosynthetic protein ADE1 (788 aa).

Residues 1 to 429 form a GARS region; the sequence is MSLRILLVGN…NRKDIAYKAF (429 aa). Residues 114 to 323 form the ATP-grasp domain; it reads KDFMKKHNIP…LAEVMLACVE (210 aa). 140–201 serves as a coordination point for ATP; it reads VKKVGHRVVI…EEFLEGDELS (62 aa). Residues glutamate 291 and asparagine 293 each contribute to the Mg(2+) site. An AIRS region spans residues 439 to 752; it reads ITYAQAGVSI…VVKQEKVAEV (314 aa).

It in the N-terminal section; belongs to the GARS family. In the C-terminal section; belongs to the AIR synthase family. Mg(2+) is required as a cofactor. The cofactor is Mn(2+).

It is found in the cytoplasm. The protein localises to the cytosol. It catalyses the reaction 5-phospho-beta-D-ribosylamine + glycine + ATP = N(1)-(5-phospho-beta-D-ribosyl)glycinamide + ADP + phosphate + H(+). The catalysed reaction is 2-formamido-N(1)-(5-O-phospho-beta-D-ribosyl)acetamidine + ATP = 5-amino-1-(5-phospho-beta-D-ribosyl)imidazole + ADP + phosphate + H(+). It functions in the pathway purine metabolism; IMP biosynthesis via de novo pathway; 5-amino-1-(5-phospho-D-ribosyl)imidazole from N(2)-formyl-N(1)-(5-phospho-D-ribosyl)glycinamide: step 2/2. Its pathway is purine metabolism; IMP biosynthesis via de novo pathway; N(1)-(5-phospho-D-ribosyl)glycinamide from 5-phospho-alpha-D-ribose 1-diphosphate: step 2/2. Catalyzes the second and fifth step in the 'de novo' purine biosynthesis pathway; contains phosphoribosylamine--glycine ligase (GARS) and phosphoribosylformylglycinamidine cyclo-ligase (AIRS) activities. This Yarrowia lipolytica (strain CLIB 122 / E 150) (Yeast) protein is Bifunctional purine biosynthetic protein ADE1.